The primary structure comprises 178 residues: Deoxycytidylate deaminase (178 aa).

A CMP/dCMP-type deaminase domain is found at 14-146; sequence EWPEYFMAVA…EATAARLLFD (133 aa). A Zn(2+)-binding site is contributed by histidine 84. Glutamate 86 (proton donor) is an active-site residue. Residues cysteine 110 and cysteine 113 each coordinate Zn(2+). The residue at position 174 (serine 174) is a Phosphoserine.

It belongs to the cytidine and deoxycytidylate deaminase family. Homohexamer. The cofactor is Zn(2+).

It catalyses the reaction dCMP + H2O + H(+) = dUMP + NH4(+). It carries out the reaction 5-hydroxymethyl-dCMP + H2O + H(+) = 5-hydroxymethyl-dUMP + NH4(+). Allosteric enzyme whose activity is greatly influenced by the end products of its metabolic pathway, dCTP and dTTP. In terms of biological role, catalyzes the deamination of dCMP to dUMP, providing the nucleoside monophosphate substrate for the thymidylate synthase/TYMS. Also, part of a nucleotide salvage pathway that eliminates epigenetically modified 5-hydroxymethyl-dCMP (hmdCMP) in a two-step process entailing deamination to cytotoxic 5-hydroxymethyl-dUMP (hmdUMP), followed by its hydrolysis into 5-hydroxymethyluracil (hmU) and 2-deoxy-D-ribose 5-phosphate (deoxyribosephosphate). Catalyzes the first step in that pathway, the deamination of 5-hydroxymethyl-dCMP (hmdCMP). The polypeptide is Deoxycytidylate deaminase (Pongo abelii (Sumatran orangutan)).